A 90-amino-acid chain; its full sequence is Neuropeptide-like 3 (90 aa).

The signal sequence occupies residues 1-16 (MFKLCVFVALLSLAAA). 2 propeptides span residues 17–54 (APAP…LAPQ) and 67–79 (AITQ…LLIK). At I89 the chain carries Isoleucine amide.

It localises to the secreted. The chain is Neuropeptide-like 3 (Nplp3) from Drosophila melanogaster (Fruit fly).